The sequence spans 165 residues: (2E)-enoyl-[ACP] glycyltransferase (165 aa).

This sequence belongs to the FcoT family.

The enzyme catalyses a (3R)-3-[(carboxymethyl)amino]fatty acid + holo-[ACP] + H(+) = a (2E)-enoyl-[ACP] + glycine + H2O. The catalysed reaction is (3R)-3-[(carboxymethyl)amino]butanoate + holo-[ACP] + H(+) = (2E)-butenoyl-[ACP] + glycine + H2O. Its function is as follows. Involved in the biosynthesis of a unique class of isonitrile lipopeptides (INLPs). Catalyzes a Michael addition of glycine to the beta-position of an alpha,beta-unsaturated fatty acyl-[ACP], producing a (3R)-3-[(carboxymethyl)amino]fatty acid. Acts on the (2E)-butenoyl moiety loaded on the acyl-carrier protein ScoB, forming the product (3R)-3-[(carboxymethyl)amino]butanoate released from ScoB. The sequence is that of (2E)-enoyl-[ACP] glycyltransferase from Streptomyces coeruleorubidus.